A 92-amino-acid chain; its full sequence is Putative transition state regulator Abh (92 aa).

Positions 5–50 (GVVRKVDELGRIVMPIELRRALDIAIKDSIEFFVDGDKIILKKYKP) constitute a SpoVT-AbrB domain.

It to B.subtilis AbrB and SpoVT.

This Bacillus subtilis (strain 168) protein is Putative transition state regulator Abh (abh).